A 313-amino-acid chain; its full sequence is Leucine zipper protein 4 (313 aa).

An interaction with DDX39B/UAP56 region spans residues 1 to 119; sequence MASFRKLTLS…PLIEQEKCSD (119 aa). Disordered stretches follow at residues 1–238 and 290–313; these read MASF…QGDL and QSGR…TITT. The UAP56-binding motif (UBM); required for proper nuclear localization motif lies at 22–40; the sequence is KVNFLDMSLDDIIIYKELE. Residues 34–60 are compositionally biased toward basic and acidic residues; the sequence is IIYKELEGTNAEEEKNKRQNHSKKESP. The segment at 51-80 is arg-rich; required for RNA-binding; the sequence is RQNHSKKESPSRQQSKAHRHRHRRGYSRCR. The segment covering 65 to 77 has biased composition (basic residues); sequence SKAHRHRHRRGYS. Positions 81 to 92 are enriched in basic and acidic residues; it reads SNSEEGNHDKKP. Polar residues predominate over residues 126–141; sequence EKNQGQSEGNQHQSEG. A compositionally biased stretch (basic and acidic residues) spans 142–168; the sequence is NPDKSEESQGQPEENHHSERSRNHLER. Residues 169–179 show a composition bias toward polar residues; the sequence is SLSQSDRSQGQ. The RS-containing His-rich (RS-H); necessary for nuclear localization stretch occupies residues 178–236; sequence GQLKRHHPQYERSHGQYKRSHGQSERSHGHSERSHGHSERSHGHSERSHGHSKRSRSQG. Over residues 199–226 the composition is skewed to basic and acidic residues; the sequence is GQSERSHGHSERSHGHSERSHGHSERSH. Ser-234 is subject to Phosphoserine. The tract at residues 238 to 287 is leucine-zipper; required for RNA-binding and for its relocalization to the cytoplasm during cell division; that stretch reads LVDTQSDLIATQRDLIATQKDLIATQRDLIATQRDLIVTQRDLVATERDL. An interaction with NXF1 region spans residues 241-313; the sequence is TQSDLIATQR…YSTGKNTITT (73 aa). The span at 304–313 shows a compositional bias: polar residues; it reads YSTGKNTITT.

Interacts with NXF1, NXF2, THOC1, THOC5, DDX39B/UAP56 and SRRT. In terms of tissue distribution, expressed specifically in testis. Also expressed in a wide variety of cancer types, but particularly high levels of expression observed in melanoma cells.

The protein resides in the nucleus. Its subcellular location is the cytoplasm. In terms of biological role, export adapter involved in mRNA nuclear export in cancer cells. Binds and enhances the RNA-binding activity of the nuclear RNA export factor NXF1. Can restore mRNA export function in cells compromised by loss of mRNA export adapters. This Homo sapiens (Human) protein is Leucine zipper protein 4 (LUZP4).